A 141-amino-acid polypeptide reads, in one-letter code: Large ribosomal subunit protein uL11 (141 aa).

It belongs to the universal ribosomal protein uL11 family. Part of the ribosomal stalk of the 50S ribosomal subunit. Interacts with L10 and the large rRNA to form the base of the stalk. L10 forms an elongated spine to which L12 dimers bind in a sequential fashion forming a multimeric L10(L12)X complex. One or more lysine residues are methylated.

Functionally, forms part of the ribosomal stalk which helps the ribosome interact with GTP-bound translation factors. This chain is Large ribosomal subunit protein uL11, found in Streptococcus agalactiae serotype III (strain NEM316).